The sequence spans 159 residues: Ribosomal RNA large subunit methyltransferase H (159 aa).

The S-adenosyl-L-methionine site is built by Leu-76 and Gly-108.

Belongs to the RNA methyltransferase RlmH family. Homodimer.

The protein resides in the cytoplasm. It carries out the reaction pseudouridine(1915) in 23S rRNA + S-adenosyl-L-methionine = N(3)-methylpseudouridine(1915) in 23S rRNA + S-adenosyl-L-homocysteine + H(+). Specifically methylates the pseudouridine at position 1915 (m3Psi1915) in 23S rRNA. This is Ribosomal RNA large subunit methyltransferase H from Pediococcus pentosaceus (strain ATCC 25745 / CCUG 21536 / LMG 10740 / 183-1w).